Reading from the N-terminus, the 241-residue chain is Sugar fermentation stimulation protein homolog (241 aa).

The protein belongs to the SfsA family.

The protein is Sugar fermentation stimulation protein homolog of Nostoc sp. (strain PCC 7120 / SAG 25.82 / UTEX 2576).